Here is a 713-residue protein sequence, read N- to C-terminus: Catalase-peroxidase (713 aa).

Residues 77–200 constitute a cross-link (tryptophyl-tyrosyl-methioninium (Trp-Tyr) (with M-226)); it reads WHSAGTYRTT…LGATVMGLIY (124 aa). Catalysis depends on H78, which acts as the Proton acceptor. A cross-link (tryptophyl-tyrosyl-methioninium (Tyr-Met) (with W-77)) is located at residues 200–226; that stretch reads YVNPEGPDGEPDLEGSAANIRESFGRM. H241 provides a ligand contact to heme b.

Belongs to the peroxidase family. Peroxidase/catalase subfamily. In terms of assembly, homodimer or homotetramer. It depends on heme b as a cofactor. Formation of the three residue Trp-Tyr-Met cross-link is important for the catalase, but not the peroxidase activity of the enzyme.

The enzyme catalyses H2O2 + AH2 = A + 2 H2O. The catalysed reaction is 2 H2O2 = O2 + 2 H2O. Functionally, bifunctional enzyme with both catalase and broad-spectrum peroxidase activity. This Natronomonas pharaonis (strain ATCC 35678 / DSM 2160 / CIP 103997 / JCM 8858 / NBRC 14720 / NCIMB 2260 / Gabara) (Halobacterium pharaonis) protein is Catalase-peroxidase.